Consider the following 559-residue polypeptide: MRRLSSWRKMATAEKQKHDGRVKIGHYILGDTLGVGTFGKVKVGKHELTGHKVAVKILNRQKIRSLDVVGKIRREIQNLKLFRHPHIIKLYQVISTPSDIFMVMEYVSGGELFDYICKNGRLDEKESRRLFQQILSGVDYCHRHMVVHRDLKPENVLLDAHMNAKIADFGLSNMMSDGEFLRTSCGSPNYAAPEVISGRLYAGPEVDIWSSGVILYALLCGTLPFDDDHVPTLFKKICDGIFYTPQYLNPSVISLLKHMLQVDPMKRATIKDIREHEWFKQDLPKYLFPEDPSYSSTMIDDEALKEVCEKFECSEEEVLSCLYNRNHQDPLAVAYHLIIDNRRIMNEAKDFYLATSPPDSFLDDHHLTRPHPERVPFLVAETPRARHTLDELNPQKSKHQGVRKAKWHLGIRSQSRPNDIMAEVCRAIKQLDYEWKVVNPYYLRVRRKNPVTSTFSKMSLQLYQVDSRTYLLDFRSIDDEITEAKSGTATPQRSGSISNYRSCQRSDSDAEAQGKPSEVSLTSSVTSLDSSPVDVAPRPGSHTIEFFEMCANLIKILAQ.

In terms of domain architecture, Protein kinase spans 27–279 (YILGDTLGVG…IKDIREHEWF (253 aa)). At Thr-32 the chain carries Phosphothreonine. ATP contacts are provided by residues 33 to 41 (LGVGTFGKV) and Lys-56. The active-site Proton acceptor is Asp-150. Thr-183 is subject to Phosphothreonine; by LKB1 and CaMKK2. Thr-269 and Thr-355 each carry phosphothreonine. An AIS region spans residues 302–381 (EALKEVCEKF…PERVPFLVAE (80 aa)). Ser-356 is subject to Phosphoserine. Ser-360 is subject to Phosphoserine; by ULK1. Thr-368 is subject to Phosphothreonine; by ULK1. At Thr-382 the chain carries Phosphothreonine. Ser-397 carries the phosphoserine; by ULK1 modification. Ser-467 and Ser-486 each carry phosphoserine. Residues 484 to 536 (AKSGTATPQRSGSISNYRSCQRSDSDAEAQGKPSEVSLTSSVTSLDSSPVDVA) form a disordered region. The segment covering 485–505 (KSGTATPQRSGSISNYRSCQR) has biased composition (polar residues). Ser-486 bears the Phosphoserine; by ULK1 mark. The residue at position 488 (Thr-488) is a Phosphothreonine; by ULK1. The residue at position 490 (Thr-490) is a Phosphothreonine. Residues Ser-496, Ser-508, Ser-524, and Ser-527 each carry the phosphoserine modification. A compositionally biased stretch (low complexity) spans 516 to 535 (PSEVSLTSSVTSLDSSPVDV).

Belongs to the protein kinase superfamily. CAMK Ser/Thr protein kinase family. SNF1 subfamily. In terms of assembly, AMPK is a heterotrimer of an alpha catalytic subunit (PRKAA1 or PRKAA2), a beta (PRKAB1 or PRKAB2) and a gamma non-catalytic subunits (PRKAG1, PRKAG2 or PRKAG3). Interacts with FNIP1 and FNIP2. Mg(2+) serves as cofactor. In terms of processing, ubiquitinated. Post-translationally, phosphorylated at Thr-183 by STK11/LKB1 in complex with STE20-related adapter-alpha (STRADA) pseudo kinase and CAB39. Also phosphorylated at Thr-183 by CAMKK2; triggered by a rise in intracellular calcium ions, without detectable changes in the AMP/ATP ratio. CAMKK1 can also phosphorylate Thr-183, but at a much lower level. Dephosphorylated by protein phosphatase 2A and 2C (PP2A and PP2C). Phosphorylated by ULK1 and ULK2; leading to negatively regulate AMPK activity and suggesting the existence of a regulatory feedback loop between ULK1, ULK2 and AMPK. There is some ambiguity for some phosphosites: Ser-360/Thr-368 and Ser-486/Thr-488. Dephosphorylated by PPM1A and PPM1B. Glycosylated; O-GlcNAcylated by OGT, promoting the AMP-activated protein kinase (AMPK) activity. As to expression, low expression in kidney, liver, lung, heart and brain.

Its subcellular location is the cytoplasm. It is found in the nucleus. It catalyses the reaction L-seryl-[protein] + ATP = O-phospho-L-seryl-[protein] + ADP + H(+). It carries out the reaction L-threonyl-[protein] + ATP = O-phospho-L-threonyl-[protein] + ADP + H(+). The enzyme catalyses L-seryl-[acetyl-CoA carboxylase] + ATP = O-phospho-L-seryl-[acetyl-CoA carboxylase] + ADP + H(+). The catalysed reaction is L-seryl-[3-hydroxy-3-methylglutaryl-coenzyme A reductase] + ATP = O-phospho-L-seryl-[3-hydroxy-3-methylglutaryl-coenzyme A reductase] + ADP + H(+). It catalyses the reaction L-seryl-[tau protein] + ATP = O-phospho-L-seryl-[tau protein] + ADP + H(+). It carries out the reaction L-threonyl-[tau protein] + ATP = O-phospho-L-threonyl-[tau protein] + ADP + H(+). With respect to regulation, activated by phosphorylation on Thr-183. Binding of AMP to non-catalytic gamma subunit (PRKAG1, PRKAG2 or PRKAG3) results in allosteric activation, inducing phosphorylation on Thr-183. AMP-binding to gamma subunit also sustains activity by preventing dephosphorylation of Thr-183. ADP also stimulates Thr-183 phosphorylation, without stimulating already phosphorylated AMPK. ATP promotes dephosphorylation of Thr-183, rendering the enzyme inactive. Under physiological conditions AMPK mainly exists in its inactive form in complex with ATP, which is much more abundant than AMP. Selectively inhibited by compound C (6-[4-(2-Piperidin-1-yl-ethoxy)-phenyl)]-3-pyridin-4-yl-pyyrazolo[1,5-a] pyrimidine. Activated by resveratrol, a natural polyphenol present in red wine, and S17834, a synthetic polyphenol. Its function is as follows. Catalytic subunit of AMP-activated protein kinase (AMPK), an energy sensor protein kinase that plays a key role in regulating cellular energy metabolism. In response to reduction of intracellular ATP levels, AMPK activates energy-producing pathways and inhibits energy-consuming processes: inhibits protein, carbohydrate and lipid biosynthesis, as well as cell growth and proliferation. AMPK acts via direct phosphorylation of metabolic enzymes, and by longer-term effects via phosphorylation of transcription regulators. Regulates lipid synthesis by phosphorylating and inactivating lipid metabolic enzymes such as ACACA, ACACB, GYS1, HMGCR and LIPE; regulates fatty acid and cholesterol synthesis by phosphorylating acetyl-CoA carboxylase (ACACA and ACACB) and hormone-sensitive lipase (LIPE) enzymes, respectively. Promotes lipolysis of lipid droplets by mediating phosphorylation of isoform 1 of CHKA (CHKalpha2). Regulates insulin-signaling and glycolysis by phosphorylating IRS1, PFKFB2 and PFKFB3. AMPK stimulates glucose uptake in muscle by increasing the translocation of the glucose transporter SLC2A4/GLUT4 to the plasma membrane, possibly by mediating phosphorylation of TBC1D4/AS160. Regulates transcription and chromatin structure by phosphorylating transcription regulators involved in energy metabolism such as CRTC2/TORC2, FOXO3, histone H2B, HDAC5, MEF2C, MLXIPL/ChREBP, EP300, HNF4A, p53/TP53, SREBF1, SREBF2 and PPARGC1A. Acts as a key regulator of glucose homeostasis in liver by phosphorylating CRTC2/TORC2, leading to CRTC2/TORC2 sequestration in the cytoplasm. In response to stress, phosphorylates 'Ser-36' of histone H2B (H2BS36ph), leading to promote transcription. Acts as a key regulator of cell growth and proliferation by phosphorylating FNIP1, TSC2, RPTOR, WDR24 and ATG1/ULK1: in response to nutrient limitation, negatively regulates the mTORC1 complex by phosphorylating RPTOR component of the mTORC1 complex and by phosphorylating and activating TSC2. Also phosphorylates and inhibits GATOR2 subunit WDR24 in response to nutrient limitation, leading to suppress glucose-mediated mTORC1 activation. In response to energetic stress, phosphorylates FNIP1, inactivating the non-canonical mTORC1 signaling, thereby promoting nuclear translocation of TFEB and TFE3, and inducing transcription of lysosomal or autophagy genes. In response to nutrient limitation, promotes autophagy by phosphorylating and activating ATG1/ULK1. In that process, it also activates WDR45/WIPI4. Phosphorylates CASP6, thereby preventing its autoprocessing and subsequent activation. In response to nutrient limitation, phosphorylates transcription factor FOXO3 promoting FOXO3 mitochondrial import. Also acts as a regulator of cellular polarity by remodeling the actin cytoskeleton; probably by indirectly activating myosin. AMPK also acts as a regulator of circadian rhythm by mediating phosphorylation of CRY1, leading to destabilize it. May regulate the Wnt signaling pathway by phosphorylating CTNNB1, leading to stabilize it. Also has tau-protein kinase activity: in response to amyloid beta A4 protein (APP) exposure, activated by CAMKK2, leading to phosphorylation of MAPT/TAU; however the relevance of such data remains unclear in vivo. Also phosphorylates CFTR, EEF2K, KLC1, NOS3 and SLC12A1. Regulates hepatic lipogenesis. Activated via SIRT3, represses sterol regulatory element-binding protein (SREBP) transcriptional activities and ATP-consuming lipogenesis to restore cellular energy balance. Upon stress, regulates mitochondrial fragmentation through phosphorylation of MTFR1L. The protein is 5'-AMP-activated protein kinase catalytic subunit alpha-1 (Prkaa1) of Rattus norvegicus (Rat).